A 217-amino-acid polypeptide reads, in one-letter code: Phosphatidylserine decarboxylase proenzyme (217 aa).

S183 (schiff-base intermediate with substrate; via pyruvic acid) is an active-site residue. S183 is subject to Pyruvic acid (Ser); by autocatalysis.

The protein belongs to the phosphatidylserine decarboxylase family. PSD-A subfamily. In terms of assembly, heterodimer of a large membrane-associated beta subunit and a small pyruvoyl-containing alpha subunit. Pyruvate is required as a cofactor. In terms of processing, is synthesized initially as an inactive proenzyme. Formation of the active enzyme involves a self-maturation process in which the active site pyruvoyl group is generated from an internal serine residue via an autocatalytic post-translational modification. Two non-identical subunits are generated from the proenzyme in this reaction, and the pyruvate is formed at the N-terminus of the alpha chain, which is derived from the carboxyl end of the proenzyme. The post-translation cleavage follows an unusual pathway, termed non-hydrolytic serinolysis, in which the side chain hydroxyl group of the serine supplies its oxygen atom to form the C-terminus of the beta chain, while the remainder of the serine residue undergoes an oxidative deamination to produce ammonia and the pyruvoyl prosthetic group on the alpha chain.

The protein localises to the cell membrane. The catalysed reaction is a 1,2-diacyl-sn-glycero-3-phospho-L-serine + H(+) = a 1,2-diacyl-sn-glycero-3-phosphoethanolamine + CO2. Its pathway is phospholipid metabolism; phosphatidylethanolamine biosynthesis; phosphatidylethanolamine from CDP-diacylglycerol: step 2/2. In terms of biological role, catalyzes the formation of phosphatidylethanolamine (PtdEtn) from phosphatidylserine (PtdSer). The sequence is that of Phosphatidylserine decarboxylase proenzyme from Cupriavidus metallidurans (strain ATCC 43123 / DSM 2839 / NBRC 102507 / CH34) (Ralstonia metallidurans).